The primary structure comprises 214 residues: Orotate phosphoribosyltransferase (214 aa).

A 5-phospho-alpha-D-ribose 1-diphosphate-binding site is contributed by lysine 26. 34–35 (FF) contributes to the orotate binding site. 5-phospho-alpha-D-ribose 1-diphosphate contacts are provided by residues 72–73 (YK), arginine 99, lysine 100, lysine 103, histidine 105, and 124–132 (DDVITAGTA). 2 residues coordinate orotate: threonine 128 and arginine 156.

Belongs to the purine/pyrimidine phosphoribosyltransferase family. PyrE subfamily. As to quaternary structure, homodimer. It depends on Mg(2+) as a cofactor.

It carries out the reaction orotidine 5'-phosphate + diphosphate = orotate + 5-phospho-alpha-D-ribose 1-diphosphate. Its pathway is pyrimidine metabolism; UMP biosynthesis via de novo pathway; UMP from orotate: step 1/2. Functionally, catalyzes the transfer of a ribosyl phosphate group from 5-phosphoribose 1-diphosphate to orotate, leading to the formation of orotidine monophosphate (OMP). The sequence is that of Orotate phosphoribosyltransferase from Pseudoalteromonas translucida (strain TAC 125).